The sequence spans 244 residues: Large ribosomal subunit protein uL3 (244 aa).

This sequence belongs to the universal ribosomal protein uL3 family. In terms of assembly, part of the 50S ribosomal subunit. Forms a cluster with proteins L14 and L19.

In terms of biological role, one of the primary rRNA binding proteins, it binds directly near the 3'-end of the 23S rRNA, where it nucleates assembly of the 50S subunit. In Aquifex pyrophilus, this protein is Large ribosomal subunit protein uL3.